Here is a 460-residue protein sequence, read N- to C-terminus: tRNA (guanine(37)-N(1))-methyltransferase (460 aa).

S-adenosyl-L-methionine contacts are provided by residues histidine 204, aspartate 243 to leucine 244, aspartate 271 to alanine 272, and asparagine 292. A compositionally biased stretch (low complexity) spans alanine 390–asparagine 428. The interval alanine 390 to asparagine 460 is disordered. The span at aspartate 442–serine 451 shows a compositional bias: acidic residues.

Belongs to the class I-like SAM-binding methyltransferase superfamily. TRM5/TYW2 family. Monomer.

It localises to the mitochondrion matrix. The protein localises to the nucleus. The protein resides in the cytoplasm. It carries out the reaction guanosine(37) in tRNA + S-adenosyl-L-methionine = N(1)-methylguanosine(37) in tRNA + S-adenosyl-L-homocysteine + H(+). Functionally, specifically methylates the N1 position of guanosine-37 in various cytoplasmic and mitochondrial tRNAs. Methylation is not dependent on the nature of the nucleoside 5' of the target nucleoside. This is the first step in the biosynthesis of wybutosine (yW), a modified base adjacent to the anticodon of tRNAs and required for accurate decoding. The polypeptide is tRNA (guanine(37)-N(1))-methyltransferase (trmt5) (Dictyostelium discoideum (Social amoeba)).